The sequence spans 382 residues: 3-isopropylmalate dehydrogenase (382 aa).

Position 91–102 (91–102 (GPKWGTGSVRPE)) interacts with NAD(+). Positions 109, 119, 148, and 240 each coordinate substrate. Residues D240, D265, and D269 each contribute to the Mg(2+) site. 304–315 (GSAPDLTENKVN) is a binding site for NAD(+).

It belongs to the isocitrate and isopropylmalate dehydrogenases family. In terms of assembly, homodimer. It depends on Mg(2+) as a cofactor. The cofactor is Mn(2+).

The protein resides in the cytoplasm. The catalysed reaction is (2R,3S)-3-isopropylmalate + NAD(+) = 4-methyl-2-oxopentanoate + CO2 + NADH. It participates in amino-acid biosynthesis; L-leucine biosynthesis; L-leucine from 3-methyl-2-oxobutanoate: step 3/4. Functionally, catalyzes the oxidation of 3-carboxy-2-hydroxy-4-methylpentanoate (3-isopropylmalate) to 3-carboxy-4-methyl-2-oxopentanoate. The product decarboxylates to 4-methyl-2 oxopentanoate. The protein is 3-isopropylmalate dehydrogenase (LEU2) of Debaryomyces hansenii (strain ATCC 36239 / CBS 767 / BCRC 21394 / JCM 1990 / NBRC 0083 / IGC 2968) (Yeast).